A 688-amino-acid chain; its full sequence is Amino-acid acetyltransferase, mitochondrial (688 aa).

Residues 1-45 (MSSRALTWPRTAKSSLLKQQTSSFVGQPKLGTPNCRSFSSTADRP) constitute a mitochondrion transit peptide. 2 disordered regions span residues 1–59 (MSSR…SKSY) and 96–119 (LKAQ…TVTQ). 3 stretches are compositionally biased toward polar residues: residues 12-25 (AKSS…SSFV), 34-57 (NCRS…SSSK), and 106-119 (TEPT…TVTQ). Positions 509–678 (NRPRLSLDDP…YEQVCRSIQP (170 aa)) constitute an N-acetyltransferase domain.

This sequence belongs to the acetyltransferase family.

It localises to the mitochondrion. It catalyses the reaction L-glutamate + acetyl-CoA = N-acetyl-L-glutamate + CoA + H(+). The protein operates within amino-acid biosynthesis; L-arginine biosynthesis; N(2)-acetyl-L-ornithine from L-glutamate: step 1/4. Functionally, N-acetylglutamate synthase involved in arginine biosynthesis. In Aspergillus flavus (strain ATCC 200026 / FGSC A1120 / IAM 13836 / NRRL 3357 / JCM 12722 / SRRC 167), this protein is Amino-acid acetyltransferase, mitochondrial (arg2).